The primary structure comprises 313 residues: tRNA pseudouridine synthase B (313 aa).

Residue D46 is the Nucleophile of the active site.

The protein belongs to the pseudouridine synthase TruB family. Type 1 subfamily.

It catalyses the reaction uridine(55) in tRNA = pseudouridine(55) in tRNA. In terms of biological role, responsible for synthesis of pseudouridine from uracil-55 in the psi GC loop of transfer RNAs. This is tRNA pseudouridine synthase B from Nitrosospira multiformis (strain ATCC 25196 / NCIMB 11849 / C 71).